We begin with the raw amino-acid sequence, 280 residues long: UPF0276 protein NMA0228 (280 aa).

It belongs to the UPF0276 family.

The chain is UPF0276 protein NMA0228 from Neisseria meningitidis serogroup A / serotype 4A (strain DSM 15465 / Z2491).